A 376-amino-acid polypeptide reads, in one-letter code: DNA polymerase IV (376 aa).

A UmuC domain is found at 6 to 187; it reads IIHIDMDAFF…LSIGKFYGVG (182 aa). Residues Asp10 and Asp105 each coordinate Mg(2+). The active site involves Glu106.

The protein belongs to the DNA polymerase type-Y family. As to quaternary structure, monomer. It depends on Mg(2+) as a cofactor.

It is found in the cytoplasm. The enzyme catalyses DNA(n) + a 2'-deoxyribonucleoside 5'-triphosphate = DNA(n+1) + diphosphate. Functionally, poorly processive, error-prone DNA polymerase involved in untargeted mutagenesis. Copies undamaged DNA at stalled replication forks, which arise in vivo from mismatched or misaligned primer ends. These misaligned primers can be extended by PolIV. Exhibits no 3'-5' exonuclease (proofreading) activity. May be involved in translesional synthesis, in conjunction with the beta clamp from PolIII. The protein is DNA polymerase IV of Desulfotalea psychrophila (strain LSv54 / DSM 12343).